Consider the following 361-residue polypeptide: Phospho-N-acetylmuramoyl-pentapeptide-transferase (361 aa).

The next 10 membrane-spanning stretches (helical) occupy residues 25–45 (TGGA…WIID), 72–92 (TPTM…VLWA), 95–115 (LNPY…VGFY), 135–155 (LLIE…LGRG), 169–189 (VVLN…VGAG), 200–220 (GLAI…SYLV), 240–260 (LAVL…FNAP), 264–284 (IFMG…IAVA), 289–309 (IVLA…IVQV), and 338–358 (QIVI…LSTL).

This sequence belongs to the glycosyltransferase 4 family. MraY subfamily. It depends on Mg(2+) as a cofactor.

The protein localises to the cell inner membrane. The enzyme catalyses UDP-N-acetyl-alpha-D-muramoyl-L-alanyl-gamma-D-glutamyl-meso-2,6-diaminopimeloyl-D-alanyl-D-alanine + di-trans,octa-cis-undecaprenyl phosphate = di-trans,octa-cis-undecaprenyl diphospho-N-acetyl-alpha-D-muramoyl-L-alanyl-D-glutamyl-meso-2,6-diaminopimeloyl-D-alanyl-D-alanine + UMP. The protein operates within cell wall biogenesis; peptidoglycan biosynthesis. In terms of biological role, catalyzes the initial step of the lipid cycle reactions in the biosynthesis of the cell wall peptidoglycan: transfers peptidoglycan precursor phospho-MurNAc-pentapeptide from UDP-MurNAc-pentapeptide onto the lipid carrier undecaprenyl phosphate, yielding undecaprenyl-pyrophosphoryl-MurNAc-pentapeptide, known as lipid I. This is Phospho-N-acetylmuramoyl-pentapeptide-transferase from Rhodopseudomonas palustris (strain HaA2).